The chain runs to 298 residues: ADP/ATP translocase 1 (298 aa).

The Mitochondrial intermembrane segment spans residues 1-7 (MSDQALS). Serine 2 bears the N-acetylserine mark. Residues 6 to 98 (LSFLKDFLAG…FAFKDKYKQI (93 aa)) form a Solcar 1 repeat. Residue serine 7 is modified to Phosphoserine. The helical transmembrane segment at 8–37 (FLKDFLAGGVAAAVSKTAVAPIERVKLLLQ) threads the bilayer. Over 38–74 (VQHASKQISAEKQYKGIIDCVVRIPKEQGFLSFWRGN) the chain is Mitochondrial matrix. An N6,N6,N6-trimethyllysine modification is found at lysine 52. Residues 75-99 (LANVIRYFPTQALNFAFKDKYKQIF) form a helical membrane-spanning segment. Residues arginine 80 and lysine 92 each coordinate ADP. At 100–109 (LGGVDRHKQF) the chain is on the mitochondrial intermembrane side. Residues 110–130 (WRYFAGNLASGGAAGATSLCF) traverse the membrane as a helical segment. Solcar repeat units lie at residues 111 to 201 (RYFA…AKGM) and 212 to 297 (VSWM…IKKY). The Mitochondrial matrix portion of the chain corresponds to 131–178 (VYPLDFARTRLAADVGKGAAQREFSGLGNCLTKIFKSDGLRGLYQGFN). Lysine 147 bears the N6-succinyllysine mark. Cysteine 160 is modified (S-nitrosocysteine). Residues 179–199 (VSVQGIIIYRAAYFGVYDTAK) form a helical membrane-spanning segment. Over 200 to 210 (GMLPDPKNVHI) the chain is Mitochondrial intermembrane. Residues 211 to 231 (IVSWMIAQTVTAVAGLVSYPF) form a helical membrane-spanning segment. Residues 232–273 (DTVRRRMMMQSGRKGADIMYTGTVDCWKKIAKDEGAKAFFKG) lie on the Mitochondrial matrix side of the membrane. Arginine 235 is a binding site for ADP. An important for transport activity region spans residues 235-240 (RRRMMM). The Nucleotide carrier signature motif motif lies at 235–240 (RRRMMM). Lysine 245 and lysine 272 each carry N6-succinyllysine. Residues 274–291 (AWSNVLRGMGGAFVLVLY) form a helical membrane-spanning segment. Over 292 to 298 (DEIKKYV) the chain is Mitochondrial intermembrane.

This sequence belongs to the mitochondrial carrier (TC 2.A.29) family. In terms of assembly, monomer. Found in a complex with ARL2, ARL2BP and SLC25A4/ANT1. Interacts with ARL2BP. Interacts with TIMM44; leading to inhibit the presequence translocase TIMM23, thereby promoting stabilization of PINK1. Post-translationally, under cell death induction, transglutaminated by TGM2. Transglutamination leads to formation of covalent cross-links between a glutamine and the epsilon-amino group of a lysine residue, forming polymers.

It is found in the mitochondrion inner membrane. It localises to the membrane. The catalysed reaction is ADP(in) + ATP(out) = ADP(out) + ATP(in). It carries out the reaction H(+)(in) = H(+)(out). Its activity is regulated as follows. The matrix-open state (m-state) is inhibited by the membrane-permeable bongkrekic acid (BKA). The cytoplasmic-open state (c-state) is inhibited by the membrane-impermeable toxic inhibitor carboxyatractyloside (CATR). Proton transporter activity is inhibited by ADP:ATP antiporter activity. ADP:ATP antiporter that mediates import of ADP into the mitochondrial matrix for ATP synthesis, and export of ATP out to fuel the cell. Cycles between the cytoplasmic-open state (c-state) and the matrix-open state (m-state): operates by the alternating access mechanism with a single substrate-binding site intermittently exposed to either the cytosolic (c-state) or matrix (m-state) side of the inner mitochondrial membrane. In addition to its ADP:ATP antiporter activity, also involved in mitochondrial uncoupling and mitochondrial permeability transition pore (mPTP) activity. Plays a role in mitochondrial uncoupling by acting as a proton transporter: proton transport uncouples the proton flows via the electron transport chain and ATP synthase to reduce the efficiency of ATP production and cause mitochondrial thermogenesis. Proton transporter activity is inhibited by ADP:ATP antiporter activity, suggesting that SLC25A4/ANT1 acts as a master regulator of mitochondrial energy output by maintaining a delicate balance between ATP production (ADP:ATP antiporter activity) and thermogenesis (proton transporter activity). Proton transporter activity requires free fatty acids as cofactor, but does not transport it. Probably mediates mitochondrial uncoupling in tissues that do not express UCP1. Also plays a key role in mPTP opening, a non-specific pore that enables free passage of the mitochondrial membranes to solutes of up to 1.5 kDa, and which contributes to cell death. It is however unclear if SLC25A4/ANT1 constitutes a pore-forming component of mPTP or regulates it. Acts as a regulator of mitophagy independently of ADP:ATP antiporter activity: promotes mitophagy via interaction with TIMM44, leading to inhibit the presequence translocase TIMM23, thereby promoting stabilization of PINK1. The sequence is that of ADP/ATP translocase 1 from Oryctolagus cuniculus (Rabbit).